The chain runs to 144 residues: Large ribosomal subunit protein uL15 (144 aa).

The interval 1-49 (MRLNTLSPAAGAKSAAKRVGRGIGSGTGKTCGRGHKGQKSRSGGGVRVG) is disordered. Residues 21–31 (RGIGSGTGKTC) are compositionally biased toward gly residues.

The protein belongs to the universal ribosomal protein uL15 family. In terms of assembly, part of the 50S ribosomal subunit.

Its function is as follows. Binds to the 23S rRNA. This chain is Large ribosomal subunit protein uL15, found in Shewanella sediminis (strain HAW-EB3).